The primary structure comprises 229 residues: UPF0758 protein Moth_0536 (229 aa).

The MPN domain maps to 107-229 (VIRNPRDVAG…FTSLKERNLL (123 aa)). Zn(2+)-binding residues include His178, His180, and Asp191. The JAMM motif signature appears at 178-191 (HNHPSGDPTPSQED).

The protein belongs to the UPF0758 family.

The polypeptide is UPF0758 protein Moth_0536 (Moorella thermoacetica (strain ATCC 39073 / JCM 9320)).